Consider the following 123-residue polypeptide: Small ribosomal subunit protein uS12 (123 aa).

The segment at 1-28 (MPTIQQLIRKPREPKRVRSKSQHLESCP) is disordered. Asp-89 bears the 3-methylthioaspartic acid mark.

It belongs to the universal ribosomal protein uS12 family. As to quaternary structure, part of the 30S ribosomal subunit. Contacts proteins S8 and S17. May interact with IF1 in the 30S initiation complex.

In terms of biological role, with S4 and S5 plays an important role in translational accuracy. Its function is as follows. Interacts with and stabilizes bases of the 16S rRNA that are involved in tRNA selection in the A site and with the mRNA backbone. Located at the interface of the 30S and 50S subunits, it traverses the body of the 30S subunit contacting proteins on the other side and probably holding the rRNA structure together. The combined cluster of proteins S8, S12 and S17 appears to hold together the shoulder and platform of the 30S subunit. The chain is Small ribosomal subunit protein uS12 from Cereibacter sphaeroides (strain ATCC 17029 / ATH 2.4.9) (Rhodobacter sphaeroides).